The primary structure comprises 276 residues: Octanoyltransferase LipM (276 aa).

The region spanning 31–246 (GKVPPTVRFY…GFASGLEVEL (216 aa)) is the BPL/LPL catalytic domain. Residue Cys148 is the Acyl-thioester intermediate of the active site.

It belongs to the octanoyltransferase LipM family. Monomer.

It carries out the reaction octanoyl-[ACP] + L-lysyl-[protein] = N(6)-octanoyl-L-lysyl-[protein] + holo-[ACP] + H(+). The protein operates within protein modification; protein lipoylation via endogenous pathway; protein N(6)-(lipoyl)lysine from octanoyl-[acyl-carrier-protein]. Catalyzes the transfer of endogenously produced octanoic acid from octanoyl-acyl-carrier-protein onto the lipoyl domain of GcvH, an intermediate carrier during protein lipoylation. This is Octanoyltransferase LipM from Brevibacillus brevis (strain 47 / JCM 6285 / NBRC 100599).